A 424-amino-acid polypeptide reads, in one-letter code: GTPase HflX (424 aa).

The Hflx-type G domain maps to 194-364 (YTVALTGYTG…AVVEMLPEKV (171 aa)). Residues 200-207 (GYTGAGKT), 225-229 (FATLS), 246-249 (DTIG), 314-317 (NKID), and 342-344 (SAA) each bind GTP. Mg(2+) contacts are provided by Thr207 and Thr227.

The protein belongs to the TRAFAC class OBG-HflX-like GTPase superfamily. HflX GTPase family. In terms of assembly, monomer. Associates with the 50S ribosomal subunit. Mg(2+) serves as cofactor.

Its subcellular location is the cytoplasm. Its function is as follows. GTPase that associates with the 50S ribosomal subunit and may have a role during protein synthesis or ribosome biogenesis. This is GTPase HflX from Thermofilum pendens (strain DSM 2475 / Hrk 5).